Here is a 380-residue protein sequence, read N- to C-terminus: Queuine tRNA-ribosyltransferase (380 aa).

The Proton acceptor role is filled by aspartate 95. Substrate is bound by residues 95–99, aspartate 149, glutamine 192, and glycine 219; that span reads DSGGF. The segment at 250–256 is RNA binding; that stretch reads GVGSADA. Aspartate 269 functions as the Nucleophile in the catalytic mechanism. The RNA binding; important for wobble base 34 recognition stretch occupies residues 274–278; the sequence is TRIAR. Cysteine 307, cysteine 309, cysteine 312, and histidine 338 together coordinate Zn(2+).

The protein belongs to the queuine tRNA-ribosyltransferase family. Homodimer. Within each dimer, one monomer is responsible for RNA recognition and catalysis, while the other monomer binds to the replacement base PreQ1. Zn(2+) is required as a cofactor.

It carries out the reaction 7-aminomethyl-7-carbaguanine + guanosine(34) in tRNA = 7-aminomethyl-7-carbaguanosine(34) in tRNA + guanine. Its pathway is tRNA modification; tRNA-queuosine biosynthesis. Its function is as follows. Catalyzes the base-exchange of a guanine (G) residue with the queuine precursor 7-aminomethyl-7-deazaguanine (PreQ1) at position 34 (anticodon wobble position) in tRNAs with GU(N) anticodons (tRNA-Asp, -Asn, -His and -Tyr). Catalysis occurs through a double-displacement mechanism. The nucleophile active site attacks the C1' of nucleotide 34 to detach the guanine base from the RNA, forming a covalent enzyme-RNA intermediate. The proton acceptor active site deprotonates the incoming PreQ1, allowing a nucleophilic attack on the C1' of the ribose to form the product. After dissociation, two additional enzymatic reactions on the tRNA convert PreQ1 to queuine (Q), resulting in the hypermodified nucleoside queuosine (7-(((4,5-cis-dihydroxy-2-cyclopenten-1-yl)amino)methyl)-7-deazaguanosine). The polypeptide is Queuine tRNA-ribosyltransferase (Lactiplantibacillus plantarum (strain ATCC BAA-793 / NCIMB 8826 / WCFS1) (Lactobacillus plantarum)).